We begin with the raw amino-acid sequence, 122 residues long: Large ribosomal subunit protein bL12 (122 aa).

It belongs to the bacterial ribosomal protein bL12 family. As to quaternary structure, homodimer. Part of the ribosomal stalk of the 50S ribosomal subunit. Forms a multimeric L10(L12)X complex, where L10 forms an elongated spine to which 2 to 4 L12 dimers bind in a sequential fashion. Binds GTP-bound translation factors.

Its function is as follows. Forms part of the ribosomal stalk which helps the ribosome interact with GTP-bound translation factors. Is thus essential for accurate translation. The chain is Large ribosomal subunit protein bL12 from Buchnera aphidicola subsp. Acyrthosiphon pisum (strain Tuc7).